Consider the following 595-residue polypeptide: Grainyhead-like protein 3 homolog (595 aa).

Positions D29–E92 are transcription activation. The region spanning A221–I454 is the Grh/CP2 DB domain. The segment at S484–S505 is disordered.

It belongs to the grh/CP2 family. Grainyhead subfamily.

It localises to the nucleus. Transcription factor playing important roles in primary neurulation and in the differentiation of stratified epithelia of both ectodermal and endodermal origin. Binds directly to the consensus DNA sequence 5'-AACCGGTT-3' acting as an activator and repressor on distinct target genes. This Xenopus laevis (African clawed frog) protein is Grainyhead-like protein 3 homolog (grhl3).